A 366-amino-acid chain; its full sequence is Palmitoyltransferase ZDHHC2 (366 aa).

At 1–15 the chain is on the cytoplasmic side; sequence MAPSGSGGVRRRCRR. Residues 16–36 form a helical membrane-spanning segment; it reads VLYWIPVVFISLLLGWSYYAY. Residues 37–47 lie on the Lumenal side of the membrane; the sequence is AIQLCIVSMEN. Residues 48 to 68 traverse the membrane as a helical segment; the sequence is IGEQVVCLMAYHLLFAMFVWS. Over 69–169 the chain is Cytoplasmic; sequence YWKTIFTLPM…NNCVGFSNYK (101 aa). A DHHC domain is found at 126-176; sequence RYCDRCQLIKPDRCHHCSVCDKCILKMDHHCPWVNNCVGFSNYKFFLLFLA. The active-site S-palmitoyl cysteine intermediate is C156. The helical transmembrane segment at 170–190 threads the bilayer; it reads FFLLFLAYSLLYCLFIAATDL. Topologically, residues 191-207 are lumenal; that stretch reads QYFIRFWTNGLPDTQAK. A helical transmembrane segment spans residues 208 to 228; the sequence is FHIMFLFFAAAMFSVSLSSLF. Over 229 to 366 the chain is Cytoplasmic; sequence GYHCWLVSKN…NPALTMENET (138 aa). The segment covering 297-316 has biased composition (polar residues); that stretch reads VNQDPEQPSTPAGLNSTVKN. Residues 297 to 366 are disordered; sequence VNQDPEQPST…NPALTMENET (70 aa). The mediates localization to plasma membrane and recycling endosomes stretch occupies residues 298 to 366; sequence NQDPEQPSTP…NPALTMENET (69 aa). A compositionally biased stretch (basic and acidic residues) spans 326-336; that stretch reads PLRESQSHLLK. Positions 334-335 match the Non-canonical dileucine endocytic signal motif; sequence LL. The span at 337–347 shows a compositional bias: polar residues; that stretch reads DSQTWTESSAN. Residues 357 to 360 carry the NPxY-like endocytic signal motif; that stretch reads NPAL.

Belongs to the DHHC palmitoyltransferase family. In terms of assembly, monomer. Homodimer. The monomeric form has a higher catalytic activity. Autopalmitoylated. In terms of tissue distribution, expressed in all brain regions.

Its subcellular location is the postsynaptic density. The protein resides in the postsynaptic recycling endosome membrane. The protein localises to the cell membrane. It is found in the endoplasmic reticulum membrane. It localises to the golgi apparatus membrane. The enzyme catalyses L-cysteinyl-[protein] + hexadecanoyl-CoA = S-hexadecanoyl-L-cysteinyl-[protein] + CoA. It carries out the reaction L-cysteinyl-[protein] + tetradecanoyl-CoA = S-tetradecanoyl-L-cysteinyl-[protein] + CoA. It catalyses the reaction L-cysteinyl-[protein] + octadecanoyl-CoA = S-octadecanoyl-L-cysteinyl-[protein] + CoA. Palmitoyltransferase that catalyzes the addition of palmitate onto various protein substrates and is involved in a variety of cellular processes. Has no stringent fatty acid selectivity and in addition to palmitate can also transfer onto target proteins myristate from tetradecanoyl-CoA and stearate from octadecanoyl-CoA. In the nervous system, plays a role in long term synaptic potentiation by palmitoylating AKAP5 through which it regulates protein trafficking from the dendritic recycling endosomes to the plasma membrane and controls both structural and functional plasticity at excitatory synapses. In dendrites, mediates the palmitoylation of DLG4 when synaptic activity decreases and induces synaptic clustering of DLG4 and associated AMPA-type glutamate receptors. Also mediates the de novo and turnover palmitoylation of RGS7BP, a shuttle for Gi/o-specific GTPase-activating proteins/GAPs, promoting its localization to the plasma membrane in response to the activation of G protein-coupled receptors. Through the localization of these GTPase-activating proteins/GAPs, it also probably plays a role in G protein-coupled receptors signaling in neurons. Also probably plays a role in cell adhesion by palmitoylating CD9 and CD151 to regulate their expression and function. Palmitoylates the endoplasmic reticulum protein CKAP4 and regulates its localization to the plasma membrane. Could also palmitoylate LCK and regulate its localization to the plasma membrane. The sequence is that of Palmitoyltransferase ZDHHC2 from Mus musculus (Mouse).